The sequence spans 227 residues: UPF0173 metal-dependent hydrolase BC_4613 (227 aa).

Belongs to the UPF0173 family.

This Bacillus cereus (strain ATCC 14579 / DSM 31 / CCUG 7414 / JCM 2152 / NBRC 15305 / NCIMB 9373 / NCTC 2599 / NRRL B-3711) protein is UPF0173 metal-dependent hydrolase BC_4613.